A 365-amino-acid chain; its full sequence is UDP-N-acetylglucosamine--N-acetylmuramyl-(pentapeptide) pyrophosphoryl-undecaprenol N-acetylglucosamine transferase (365 aa).

UDP-N-acetyl-alpha-D-glucosamine-binding positions include 10–12, N128, R170, S199, I250, and Q295; that span reads TGG.

The protein belongs to the glycosyltransferase 28 family. MurG subfamily.

It localises to the cell inner membrane. The enzyme catalyses di-trans,octa-cis-undecaprenyl diphospho-N-acetyl-alpha-D-muramoyl-L-alanyl-D-glutamyl-meso-2,6-diaminopimeloyl-D-alanyl-D-alanine + UDP-N-acetyl-alpha-D-glucosamine = di-trans,octa-cis-undecaprenyl diphospho-[N-acetyl-alpha-D-glucosaminyl-(1-&gt;4)]-N-acetyl-alpha-D-muramoyl-L-alanyl-D-glutamyl-meso-2,6-diaminopimeloyl-D-alanyl-D-alanine + UDP + H(+). Its pathway is cell wall biogenesis; peptidoglycan biosynthesis. Functionally, cell wall formation. Catalyzes the transfer of a GlcNAc subunit on undecaprenyl-pyrophosphoryl-MurNAc-pentapeptide (lipid intermediate I) to form undecaprenyl-pyrophosphoryl-MurNAc-(pentapeptide)GlcNAc (lipid intermediate II). The polypeptide is UDP-N-acetylglucosamine--N-acetylmuramyl-(pentapeptide) pyrophosphoryl-undecaprenol N-acetylglucosamine transferase (Chlorobium luteolum (strain DSM 273 / BCRC 81028 / 2530) (Pelodictyon luteolum)).